The following is a 384-amino-acid chain: GTPase Obg (384 aa).

The 159-residue stretch at Met-1–Leu-159 folds into the Obg domain. A disordered region spans residues Ala-20–Trp-46. Gly residues predominate over residues Gly-33–Gly-43. The OBG-type G domain occupies Ala-160–Thr-348. Residues Gly-166–Ser-173, Phe-191–His-195, Asp-213–Gly-216, Asn-284–Asp-287, and Ser-329–Leu-331 contribute to the GTP site. The Mg(2+) site is built by Ser-173 and Thr-193.

The protein belongs to the TRAFAC class OBG-HflX-like GTPase superfamily. OBG GTPase family. In terms of assembly, monomer. Requires Mg(2+) as cofactor.

It localises to the cytoplasm. Functionally, an essential GTPase which binds GTP, GDP and possibly (p)ppGpp with moderate affinity, with high nucleotide exchange rates and a fairly low GTP hydrolysis rate. Plays a role in control of the cell cycle, stress response, ribosome biogenesis and in those bacteria that undergo differentiation, in morphogenesis control. The chain is GTPase Obg from Neisseria meningitidis serogroup B (strain ATCC BAA-335 / MC58).